The chain runs to 361 residues: Putative agmatine deiminase (361 aa).

Cys-354 functions as the Amidino-cysteine intermediate in the catalytic mechanism.

The protein belongs to the agmatine deiminase family.

It catalyses the reaction agmatine + H2O = N-carbamoylputrescine + NH4(+). The sequence is that of Putative agmatine deiminase from Streptococcus pneumoniae (strain Taiwan19F-14).